The chain runs to 541 residues: Protein wntless homolog (541 aa).

Topologically, residues Met-1 to Cys-15 are cytoplasmic. Residues Ile-16 to Ala-36 form a helical membrane-spanning segment. At Pro-37 to Lys-232 the chain is on the lumenal side. The interaction with Wnt proteins stretch occupies residues Met-101–Lys-232. Residues Val-233–Trp-253 traverse the membrane as a helical segment. Over Arg-254–Lys-268 the chain is Cytoplasmic. Residues Val-269 to Ile-289 traverse the membrane as a helical segment. Topologically, residues Gly-290–Arg-303 are lumenal. A helical membrane pass occupies residues Gln-304 to Met-324. Topologically, residues Asp-325–His-331 are cytoplasmic. The chain crosses the membrane as a helical span at residues Ile-332 to Phe-352. Topologically, residues Asp-353–Ala-380 are lumenal. The chain crosses the membrane as a helical span at residues Phe-381 to Phe-401. Topologically, residues Gln-402–Arg-431 are cytoplasmic. Residues Phe-432–Val-452 form a helical membrane-spanning segment. Topologically, residues Ser-453–Ser-471 are lumenal. A helical membrane pass occupies residues Ala-472–Tyr-492. Over Ala-493–Glu-541 the chain is Cytoplasmic.

It belongs to the wntless family. As to quaternary structure, interacts with WNT3A. Interacts with WNT1, WNT3 and WNT5. N-glycosylated. Expressed in the brain, skeletal muscle, heart muscle, lung, gut, liver, and kidney (at protein level). In the brain, expressed in the cortex, striatum, hippocampus and to a lesser extent in the cerebellum (at protein level). Expressed in kidney, lung, skin, intestine, brain, spinal cord, skeleton, eyes, excretion glands, tooth and palatal shelves. In the cerebellum, expressed in Purkinje cells.

It is found in the golgi apparatus membrane. Its subcellular location is the cytoplasmic vesicle membrane. It localises to the cell membrane. The protein resides in the endoplasmic reticulum membrane. The protein localises to the early endosome membrane. Its function is as follows. Regulates Wnt proteins sorting and secretion in a feedback regulatory mechanism. This reciprocal interaction plays a key role in the regulation of expression, subcellular location, binding and organelle-specific association of Wnt proteins. Also plays an important role in establishment of the anterior-posterior body axis formation during development. This chain is Protein wntless homolog (Wls), found in Mus musculus (Mouse).